We begin with the raw amino-acid sequence, 427 residues long: MSRSEELYTKAQISIPGGVNSPVRAFNGVGGSPIFFESAEGAYMIDADGKRYIDYVGSWGPMILGHNHPAVLEATLQAAKRGLSFGTPTEVEITMAETIRKIVPSIEKVRMVNSGTEATMTAIRLARGYTGRDKILKFEGNYHGHADSLLVKAGSGALTLGVPNSPGIPEDFAKHTLTATYNDIESVKQIFAEMGDEIACIIVEPVAGNMNCIPPVDGFLEGLRSICDDHGSVLIFDEVMTGFRVAPGGAQDRYKIKPDLTTLGKVIGGGMPVGAFGGKKEVMDYIAPVGPVYQAGTLSGNPVAMAAGLAALQQLSTPGLYDQLYQRVDTLLDGLQERADRAGVPMTTNRAGSMFGFFFTEEPEVTTYAQATQCNMEHFKTFYHAMLEQGVYLAPSAFEGGFMSAAHSEEDIQNTLNAAEKAFAKLV.

Lys-265 carries the N6-(pyridoxal phosphate)lysine modification.

This sequence belongs to the class-III pyridoxal-phosphate-dependent aminotransferase family. HemL subfamily. As to quaternary structure, homodimer. Pyridoxal 5'-phosphate serves as cofactor.

The protein resides in the cytoplasm. It catalyses the reaction (S)-4-amino-5-oxopentanoate = 5-aminolevulinate. Its pathway is porphyrin-containing compound metabolism; protoporphyrin-IX biosynthesis; 5-aminolevulinate from L-glutamyl-tRNA(Glu): step 2/2. This chain is Glutamate-1-semialdehyde 2,1-aminomutase, found in Idiomarina loihiensis (strain ATCC BAA-735 / DSM 15497 / L2-TR).